The sequence spans 76 residues: Putative small nuclear ribonucleoprotein G-like protein 15 (76 aa).

One can recognise a Sm domain in the interval 4–76; sequence AHPPELKKFT…IIMLEALERV (73 aa).

The protein belongs to the snRNP Sm proteins family.

The protein localises to the nucleus. Its function is as follows. Associated with snRNP U1, U2, U4/U6 and U5. The polypeptide is Putative small nuclear ribonucleoprotein G-like protein 15 (SNRPGP15) (Homo sapiens (Human)).